Reading from the N-terminus, the 542-residue chain is TNF receptor-associated factor 6 (542 aa).

The interaction with TAX1BP1 stretch occupies residues 1–374 (MSLLHCENSC…EAQQCNGIYI (374 aa)). The segment at 71–110 (CPICLMALREAVQTPCGHRFCKACIIKSIRDAGHKCPVDN) adopts an RING-type; degenerate zinc-finger fold. A Glycyl lysine isopeptide (Lys-Gly) (interchain with G-Cter in SUMO); alternate cross-link involves residue lysine 125. A Glycyl lysine isopeptide (Lys-Gly) (interchain with G-Cter in ubiquitin); alternate cross-link involves residue lysine 125. Residue lysine 143 forms a Glycyl lysine isopeptide (Lys-Gly) (interchain with G-Cter in SUMO) linkage. 2 TRAF-type zinc fingers span residues 151-203 (EHQA…EDKE) and 204-260 (IHEQ…NHLA). A coiled-coil region spans residues 310-368 (SEVHNFQETIQQLEGRLVRQDHQIRELTAKMETQSMYVNELKRTIRTLEDKVAEIEAQQ). Lysine 339 participates in a covalent cross-link: Glycyl lysine isopeptide (Lys-Gly) (interchain with G-Cter in ubiquitin). One can recognise an MATH domain in the interval 370–519 (NGIYIWKIGN…DDTLLVRCEV (150 aa)). The interval 375–542 (WKIGNFGMHL…FQPRSTDSGI (168 aa)) is interaction with TANK. Residue lysine 473 forms a Glycyl lysine isopeptide (Lys-Gly) (interchain with G-Cter in SUMO) linkage.

It belongs to the TNF receptor-associated factor family. A subfamily. Homotrimer. Homooligomer. N-terminal region is dimeric while C-terminal region is trimeric; maybe providing a mode of oligomerization. Upon IL1B treatment, forms a complex with PELI1, IRAK1, IRAK4 and MYD88; this complex recruits MAP3K7/TAK1, TAB1 and TAB2 to mediate NF-kappa-B activation. Direct binding of SMAD6 to PELI1 prevents the complex formation and hence negatively regulates IL1R-TLR signaling and eventually NF-kappa-B-mediated gene expression. Binds to TNFRSF5/CD40 and TNFRSF11A/RANK. Associates with NGFR, TNFRSF17, IRAK2, IRAK3, RIPK2, MAP3K1, MAP3K5, MAP3K14, CSK, TRAF, TRAF-interacting protein TRIP and TNF receptor associated protein TDP2. Interacts with IL17R. Interacts with SQSTM1 bridging NTRK1 and NGFR. Forms a ternary complex with SQSTM1 and PRKCZ. Interacts with PELI2 and PELI3. Binds UBE2V1. Interacts with TAX1BP1; this interaction mediates deubiquitination of TRAF6 and inhibition of NF-kappa-B activation. Interacts with ZNF675. Interacts with ARRB1 and ARRB2. Interacts with MAP3K7 and TAB1/MAP3K7IP1; during IL-1 signaling. Interacts with UBE2N. Interacts with TGFBR1, HDAC1 and RANGAP1. Interacts with AKT1, AKT2 and AKT3. Interacts (via TRAF domains) with NUMBL (via C-terminal). Interacts with RBCK1. Interacts with LIMD1 (via LIM domains). Interacts with RSAD2/viperin. Interacts (via C-terminus) with EIF2AK2/PKR (via the kinase catalytic domain). Interacts with ZFAND5. Interacts with IL1RL1. Interacts with TRAFD1. Interacts with AJUBA. Interacts with MAVS/IPS1. Interacts (via TRAF domains) with DYNC2I2 (via WD domains). Interacts with IFIT3 (via N-terminus). Interacts with TICAM2. Interacts with CARD14. Interacts with CD40 and MAP3K8; the interaction is required for ERK activation. Interacts with TICAM1 and this interaction is enhanced in the presence of WDFY1. Interacts with TANK; this interaction increases in response to DNA damage. Interacts with USP10; this interaction increases in response to DNA damage. Interacts with ZC3H12A; this interaction increases in response to DNA damage and is stimulated by TANK. Interacts with WDFY3. Interacts with TRIM13. Interacts with GPS2. Interacts (via C-terminus) with SASH1. Interacts with LRRC19. Interacts with IL17RA and TRAF3IP2. Interacts with TOMM70. Interacts with AMBRA1; interaction is required to mediate 'Lys-63'-linked ubiquitination of ULK1. Interacts with CRBN; this interaction inhibits TLR4-mediated signaling by preventing TRAF6-mediated ubiquitination of ECSIT. In terms of processing, sumoylated on Lys-125, Lys-143 and Lys-473 with SUMO1. Post-translationally, polyubiquitinated on Lys-125 by TRAF3IP2; after cell stimulation with IL17A. Polyubiquitinated on Lys-125; after cell stimulation with IL1B or TGFB. This ligand-induced cell stimulation leads to dimerization/oligomerization of TRAF6 molecules, followed by auto-ubiquitination which involves UBE2N and UBE2V1 and leads to TRAF6 activation. This 'Lys-63' site-specific poly-ubiquitination appears to be associated with the activation of signaling molecules. Endogenous autoubiquitination occurs only for the cytoplasmic form. Deubiquitinated by USP10 in a TANK-dependent manner, leading to the negative regulation of NF-kappa-B signaling upon DNA damage. LRRC19 induces 'Lys-63' ubiquitination. Ubiquitinated at Lys-339 by the SCF(FBXL2) complex, leading to its degradation by the proteasome.

Its subcellular location is the cytoplasm. It localises to the cell cortex. The protein resides in the nucleus. The protein localises to the lipid droplet. It carries out the reaction S-ubiquitinyl-[E2 ubiquitin-conjugating enzyme]-L-cysteine + [acceptor protein]-L-lysine = [E2 ubiquitin-conjugating enzyme]-L-cysteine + N(6)-ubiquitinyl-[acceptor protein]-L-lysine.. Its pathway is protein modification; protein ubiquitination. In terms of biological role, E3 ubiquitin ligase that, together with UBE2N and UBE2V1, mediates the synthesis of 'Lys-63'-linked-polyubiquitin chains conjugated to proteins, such as ECSIT, IKBKG, IRAK1, AKT1 and AKT2. Also mediates ubiquitination of free/unanchored polyubiquitin chain that leads to MAP3K7 activation. Leads to the activation of NF-kappa-B and JUN. Seems to also play a role in dendritic cells (DCs) maturation and/or activation. Represses c-Myb-mediated transactivation, in B-lymphocytes. Adapter protein that seems to play a role in signal transduction initiated via TNF receptor, IL-1 receptor and IL-17 receptor. Regulates osteoclast differentiation by mediating the activation of adapter protein complex 1 (AP-1) and NF-kappa-B, in response to RANK-L stimulation. Together with MAP3K8, mediates CD40 signals that activate ERK in B-cells and macrophages, and thus may play a role in the regulation of immunoglobulin production. Acts as a regulator of the JNK and NF-kappa-B signaling pathways by initiating assembly of heterotypic 'Lys-63'-/'Lys-48'-linked branched ubiquitin chains that are then recognized by TAB2: TRAF6 catalyzes initial 'Lys-63'-linked-polyubiquitin chains that are then branched via 'Lys-48'-linked polyubiquitin by HUWE1. 'Lys-63'-/'Lys-48'-linked branched ubiquitin chains protect 'Lys-63'-linkages from CYLD deubiquitination. Also participates in the TCR signaling by ubiquitinating LAT. The sequence is that of TNF receptor-associated factor 6 (TRAF6) from Bos taurus (Bovine).